The chain runs to 141 residues: Lutropin subunit beta (141 aa).

The first 20 residues, methionine 1–alanine 20, serve as a signal peptide directing secretion. Cystine bridges form between cysteine 29–cysteine 77, cysteine 43–cysteine 92, cysteine 46–cysteine 130, cysteine 54–cysteine 108, cysteine 58–cysteine 110, and cysteine 113–cysteine 120. Asparagine 33 and asparagine 50 each carry an N-linked (GlcNAc...) asparagine glycan.

It belongs to the glycoprotein hormones subunit beta family. As to quaternary structure, heterodimer of a common alpha chain and a unique beta chain which confers biological specificity to thyrotropin, lutropin, follitropin and gonadotropin.

The protein resides in the secreted. Promotes spermatogenesis and ovulation by stimulating the testes and ovaries to synthesize steroids. This is Lutropin subunit beta (LHB) from Pongo pygmaeus (Bornean orangutan).